A 150-amino-acid chain; its full sequence is uncharacterized protein (150 aa).

4 helical membrane passes run Ile12–Phe30, Arg40–Phe62, Ile74–Gly96, and Ala106–Val128.

Its subcellular location is the cell membrane. This is an uncharacterized protein from Archaeoglobus fulgidus (strain ATCC 49558 / DSM 4304 / JCM 9628 / NBRC 100126 / VC-16).